The sequence spans 886 residues: Alanine--tRNA ligase (886 aa).

The Zn(2+) site is built by His-570, His-574, Cys-673, and His-677.

It belongs to the class-II aminoacyl-tRNA synthetase family. The cofactor is Zn(2+).

It is found in the cytoplasm. The catalysed reaction is tRNA(Ala) + L-alanine + ATP = L-alanyl-tRNA(Ala) + AMP + diphosphate. Catalyzes the attachment of alanine to tRNA(Ala) in a two-step reaction: alanine is first activated by ATP to form Ala-AMP and then transferred to the acceptor end of tRNA(Ala). Also edits incorrectly charged Ser-tRNA(Ala) and Gly-tRNA(Ala) via its editing domain. This chain is Alanine--tRNA ligase, found in Chlorobium chlorochromatii (strain CaD3).